A 609-amino-acid chain; its full sequence is Protein kinase PVPK-1 (609 aa).

The segment covering 1 to 19 (MESSVNGVDSLSEVQNSVS) has biased composition (polar residues). 2 disordered regions span residues 1-51 (MESS…GHQT) and 80-100 (PTKL…EPNG). A Protein kinase domain is found at 229–565 (FRLLKKLGCG…ATEIKQHPFF (337 aa)). Residues 235–243 (LGCGDIGSV) and Lys-258 contribute to the ATP site. Asp-354 serves as the catalytic Proton acceptor. Positions 429–448 (GKSKKDKKSKPKNDMHNQVT) are disordered.

This sequence belongs to the protein kinase superfamily. Ser/Thr protein kinase family.

It catalyses the reaction L-seryl-[protein] + ATP = O-phospho-L-seryl-[protein] + ADP + H(+). The catalysed reaction is L-threonyl-[protein] + ATP = O-phospho-L-threonyl-[protein] + ADP + H(+). In Phaseolus vulgaris (Kidney bean), this protein is Protein kinase PVPK-1.